Reading from the N-terminus, the 149-residue chain is uncharacterized protein (149 aa).

Residues 1–11 are compositionally biased toward basic and acidic residues; that stretch reads MTKESKPDRLR. The segment at 1–20 is disordered; sequence MTKESKPDRLRQMGALNPKP.

This is an uncharacterized protein from Sinorhizobium fredii (strain NBRC 101917 / NGR234).